Here is a 633-residue protein sequence, read N- to C-terminus: tRNA uridine 5-carboxymethylaminomethyl modification enzyme MnmG (633 aa).

18–23 (GAGHAG) contacts FAD. A disordered region spans residues 208–232 (PRVNGNTIDFDKTEEQPGDKTPNHF). Residues 216–229 (DFDKTEEQPGDKTP) show a composition bias toward basic and acidic residues. 279-293 (GPRYCPSIEDKIVRF) serves as a coordination point for NAD(+).

This sequence belongs to the MnmG family. In terms of assembly, homodimer. Heterotetramer of two MnmE and two MnmG subunits. The cofactor is FAD.

It localises to the cytoplasm. NAD-binding protein involved in the addition of a carboxymethylaminomethyl (cmnm) group at the wobble position (U34) of certain tRNAs, forming tRNA-cmnm(5)s(2)U34. This chain is tRNA uridine 5-carboxymethylaminomethyl modification enzyme MnmG, found in Lacticaseibacillus paracasei (strain ATCC 334 / BCRC 17002 / CCUG 31169 / CIP 107868 / KCTC 3260 / NRRL B-441) (Lactobacillus paracasei).